Here is a 499-residue protein sequence, read N- to C-terminus: Bifunctional purine biosynthesis protein PurH (499 aa).

In terms of domain architecture, MGS-like spans 1 to 144 (MIKRALISVF…KNFKDVVVLT (144 aa)).

This sequence belongs to the PurH family.

It carries out the reaction (6R)-10-formyltetrahydrofolate + 5-amino-1-(5-phospho-beta-D-ribosyl)imidazole-4-carboxamide = 5-formamido-1-(5-phospho-D-ribosyl)imidazole-4-carboxamide + (6S)-5,6,7,8-tetrahydrofolate. The catalysed reaction is IMP + H2O = 5-formamido-1-(5-phospho-D-ribosyl)imidazole-4-carboxamide. It participates in purine metabolism; IMP biosynthesis via de novo pathway; 5-formamido-1-(5-phospho-D-ribosyl)imidazole-4-carboxamide from 5-amino-1-(5-phospho-D-ribosyl)imidazole-4-carboxamide (10-formyl THF route): step 1/1. It functions in the pathway purine metabolism; IMP biosynthesis via de novo pathway; IMP from 5-formamido-1-(5-phospho-D-ribosyl)imidazole-4-carboxamide: step 1/1. This is Bifunctional purine biosynthesis protein PurH from Clostridium botulinum (strain Okra / Type B1).